Here is a 357-residue protein sequence, read N- to C-terminus: Probable xyloglucan endotransglucosylase/hydrolase protein 29 (357 aa).

A signal peptide spans 1–31 (MRDSIYLLWIDNRLVVIIMMVMMVSCRCVLG). The region spanning 32–232 (LENINPIFFD…YTFSPFVSEF (201 aa)) is the GH16 domain. Catalysis depends on Glu-117, which acts as the Nucleophile. Residue Glu-121 is the Proton donor of the active site. Xyloglucan contacts are provided by residues Glu-121 and 134-136 (QTN). A glycan (N-linked (GlcNAc...) asparagine) is linked at Asn-140. Xyloglucan-binding positions include 144–148 (NRGRE), 211–212 (SW), and Gly-216. 2 N-linked (GlcNAc...) asparagine glycosylation sites follow: Asn-241 and Asn-262. A disulfide bond links Cys-299 and Cys-312. Residue Arg-304 coordinates xyloglucan. Positions 326–357 (GRLKFGGSHPKVHKARKKRRRNRSTPVVSADL) are disordered. Residues 335–348 (PKVHKARKKRRRNR) are compositionally biased toward basic residues. The N-linked (GlcNAc...) asparagine glycan is linked to Asn-347.

It belongs to the glycosyl hydrolase 16 family. XTH group 3 subfamily. Post-translationally, contains at least one intrachain disulfide bond essential for its enzymatic activity.

The protein resides in the secreted. The protein localises to the cell wall. It localises to the extracellular space. It is found in the apoplast. The enzyme catalyses breaks a beta-(1-&gt;4) bond in the backbone of a xyloglucan and transfers the xyloglucanyl segment on to O-4 of the non-reducing terminal glucose residue of an acceptor, which can be a xyloglucan or an oligosaccharide of xyloglucan.. Catalyzes xyloglucan endohydrolysis (XEH) and/or endotransglycosylation (XET). Cleaves and religates xyloglucan polymers, an essential constituent of the primary cell wall, and thereby participates in cell wall construction of growing tissues. The polypeptide is Probable xyloglucan endotransglucosylase/hydrolase protein 29 (XTH29) (Arabidopsis thaliana (Mouse-ear cress)).